A 366-amino-acid chain; its full sequence is uncharacterized protein (366 aa).

This sequence to B.subtilis XkdV.

This is an uncharacterized protein from Bacillus subtilis (strain 168).